Reading from the N-terminus, the 282-residue chain is Kanosamine-6-phosphate phosphatase (282 aa).

Catalysis depends on Asp25, which acts as the Nucleophile. Residues Asp25 and Asp27 each coordinate Mg(2+). Lys209 serves as a coordination point for phosphate. 2 residues coordinate Mg(2+): Asp232 and Ser233. Asn235 is a phosphate binding site.

The protein belongs to the HAD-like hydrolase superfamily. Cof family. In terms of assembly, homotetramer. It depends on Mg(2+) as a cofactor.

It carries out the reaction D-kanosamine 6-phosphate + H2O = kanosamine + phosphate. The protein operates within antibiotic biosynthesis; kanosamine biosynthesis. Functionally, involved in the biosynthesis of kanosamine (3-amino-3-deoxy-D-glucose), which is known to have antibiotic and antifungal properties, and to be a precursor of the antibiotic neotrehalosadiamine (3,3'-diamino-3,3'-dideoxy-alpha,beta-trehalose (NTD)). Catalyzes the dephosphorylation of kanosamine 6-phosphate to yield kanosamine. There is a trace amount of activity using glucosamine-6-phosphate. The protein is Kanosamine-6-phosphate phosphatase (ntdB) of Bacillus subtilis (strain 168).